We begin with the raw amino-acid sequence, 108 residues long: Evasin P1156 (108 aa).

An N-terminal signal peptide occupies residues 1-28; the sequence is MEVKTYAFLQIAVFIFLGMQIFASLTDA. Intrachain disulfides connect Cys-41–Cys-63, Cys-45–Cys-65, and Cys-56–Cys-76. N-linked (GlcNAc...) asparagine glycosylation occurs at Asn-44. Residues 89 to 108 are disordered; sequence NPSDSEIEAAKPKRSDTLSH. Basic and acidic residues predominate over residues 96–108; the sequence is EAAKPKRSDTLSH.

It localises to the secreted. In terms of biological role, salivary chemokine-binding protein which has chemokine-neutralizing activity and binds to host chemokines CXCL1, CXCL2, CXCL3, CXCL5, CXCL6 and CXCL8. The protein is Evasin P1156 of Ixodes ricinus (Common tick).